The following is a 424-amino-acid chain: Ankyrin repeat domain-containing protein 61 (424 aa).

7 ANK repeats span residues 80 to 109, 113 to 169, 172 to 201, 205 to 234, 239 to 278, 282 to 311, and 315 to 348; these read LSFLPIHLAAKYRKAQSLLCLLEHGADPEA, QGFT…ARVD, HRHCPLHLATIYGTHLVLSILAQNGAQVNA, SSMTPLHMAADILNKEMMQTLIAWGASVNC, TGNTALKLAVSTASSKAGRLLAAGLGCIRLLLVHGAQVNA, DGQAAIHEACFGGREVIINLLLEFEANVNI, and NGESPIHMYLQRGSNIRDTALLARLLFRSYPLRL.

The polypeptide is Ankyrin repeat domain-containing protein 61 (ANKRD61) (Bos taurus (Bovine)).